We begin with the raw amino-acid sequence, 267 residues long: Glutamate racemase (267 aa).

Residues 9–10 (DS) and 41–42 (YG) contribute to the substrate site. C72 serves as the catalytic Proton donor/acceptor. Substrate is bound at residue 73 to 74 (NT). C184 (proton donor/acceptor) is an active-site residue. Residue 185–186 (TH) participates in substrate binding.

It belongs to the aspartate/glutamate racemases family.

It carries out the reaction L-glutamate = D-glutamate. It participates in cell wall biogenesis; peptidoglycan biosynthesis. Its function is as follows. Provides the (R)-glutamate required for cell wall biosynthesis. In Staphylococcus epidermidis (strain ATCC 12228 / FDA PCI 1200), this protein is Glutamate racemase.